The following is a 209-amino-acid chain: Thiamine-phosphate synthase (209 aa).

Residues glutamine 38–lysine 42 and asparagine 70 each bind 4-amino-2-methyl-5-(diphosphooxymethyl)pyrimidine. Aspartate 71 and aspartate 90 together coordinate Mg(2+). Serine 109 contributes to the 4-amino-2-methyl-5-(diphosphooxymethyl)pyrimidine binding site. Threonine 135–threonine 137 is a 2-[(2R,5Z)-2-carboxy-4-methylthiazol-5(2H)-ylidene]ethyl phosphate binding site. Position 138 (lysine 138) interacts with 4-amino-2-methyl-5-(diphosphooxymethyl)pyrimidine. 2-[(2R,5Z)-2-carboxy-4-methylthiazol-5(2H)-ylidene]ethyl phosphate-binding positions include glycine 166 and isoleucine 186 to serine 187.

Belongs to the thiamine-phosphate synthase family. Requires Mg(2+) as cofactor.

The catalysed reaction is 2-[(2R,5Z)-2-carboxy-4-methylthiazol-5(2H)-ylidene]ethyl phosphate + 4-amino-2-methyl-5-(diphosphooxymethyl)pyrimidine + 2 H(+) = thiamine phosphate + CO2 + diphosphate. The enzyme catalyses 2-(2-carboxy-4-methylthiazol-5-yl)ethyl phosphate + 4-amino-2-methyl-5-(diphosphooxymethyl)pyrimidine + 2 H(+) = thiamine phosphate + CO2 + diphosphate. It carries out the reaction 4-methyl-5-(2-phosphooxyethyl)-thiazole + 4-amino-2-methyl-5-(diphosphooxymethyl)pyrimidine + H(+) = thiamine phosphate + diphosphate. The protein operates within cofactor biosynthesis; thiamine diphosphate biosynthesis; thiamine phosphate from 4-amino-2-methyl-5-diphosphomethylpyrimidine and 4-methyl-5-(2-phosphoethyl)-thiazole: step 1/1. Functionally, condenses 4-methyl-5-(beta-hydroxyethyl)thiazole monophosphate (THZ-P) and 2-methyl-4-amino-5-hydroxymethyl pyrimidine pyrophosphate (HMP-PP) to form thiamine monophosphate (TMP). This chain is Thiamine-phosphate synthase, found in Syntrophomonas wolfei subsp. wolfei (strain DSM 2245B / Goettingen).